Consider the following 789-residue polypeptide: Molybdenum cofactor sulfurase (789 aa).

The residue at position 251 (Lys-251) is an N6-(pyridoxal phosphate)lysine. Cys-422 is a catalytic residue. The MOSC domain occupies 628–789 (GDQVAQWLDQ…LICGETLEVD (162 aa)). Ser-741 is modified (phosphoserine).

It belongs to the class-V pyridoxal-phosphate-dependent aminotransferase family. MOCOS subfamily. It depends on pyridoxal 5'-phosphate as a cofactor.

The catalysed reaction is Mo-molybdopterin + L-cysteine + AH2 = thio-Mo-molybdopterin + L-alanine + A + H2O. The protein operates within cofactor biosynthesis; molybdopterin biosynthesis. Its function is as follows. Sulfurates the molybdenum cofactor. Sulfation of molybdenum is essential for xanthine dehydrogenase (XDH) and aldehyde oxidase (ADO) enzymes in which molybdenum cofactor is liganded by 1 oxygen and 1 sulfur atom in active form. This Drosophila willistoni (Fruit fly) protein is Molybdenum cofactor sulfurase.